The primary structure comprises 86 residues: Phosphocarrier protein HPr (86 aa).

One can recognise an HPr domain in the interval 1–86 (MVKKEAIIKA…LAELIESFKE (86 aa)). The Pros-phosphohistidine intermediate role is filled by H15.

The protein belongs to the HPr family.

It localises to the cytoplasm. In terms of biological role, general (non sugar-specific) component of the phosphoenolpyruvate-dependent sugar phosphotransferase system (sugar PTS). This major carbohydrate active-transport system catalyzes the phosphorylation of incoming sugar substrates concomitantly with their translocation across the cell membrane. The phosphoryl group from phosphoenolpyruvate (PEP) is transferred to the phosphoryl carrier protein HPr by enzyme I. Phospho-HPr then transfers it to the PTS EIIA domain. In Borreliella burgdorferi (strain ATCC 35210 / DSM 4680 / CIP 102532 / B31) (Borrelia burgdorferi), this protein is Phosphocarrier protein HPr (ptsH).